Here is a 188-residue protein sequence, read N- to C-terminus: Photosystem I assembly protein Ycf4 (188 aa).

Transmembrane regions (helical) follow at residues Trp-28–Leu-48 and Ile-68–Ile-88.

The protein belongs to the Ycf4 family.

It is found in the cellular thylakoid membrane. Functionally, seems to be required for the assembly of the photosystem I complex. In Cyanothece sp. (strain PCC 7425 / ATCC 29141), this protein is Photosystem I assembly protein Ycf4.